Here is a 424-residue protein sequence, read N- to C-terminus: MKGRVRIRGIYATALTSIFSSLSYEIVQQSVEIAERFMREVNNLPADITIKDFEYDRGKIIVMGNGTIEEDLHDVFKYSFHWKSPIKLYSVIEADESCTYGNFKVEPCLEEGIVIKPPYDGKIVLSETKAVSKYAMVWRGKGVTTFSEHINNEEERLRLLTLSSPLNRKGYNVKWRSNAKYATLNELKEDLERLVLRYENREFRDQGEDFYLITLSLPDKLHLDEVRKSIVNTVKYHHMLKLSYNREVDSLEKDKEGSPVKLLEALISDFMKIEHIKADGKAIYLRGGKVIEKEVNNDGYRITLRREINGNGVLDGIGKRIENGDYDIVEYNSDKWYQIHRYYSGIDNSLKGIYINISTPPELLKGKIRYLDLEIDIAIRDSEIIVLDEDELNKKSIYMHSSLVNKAKEVANYLIDCIQQNKLI.

Belongs to the FAU-1 family.

Functionally, probable RNase involved in rRNA stability through maturation and/or degradation of precursor rRNAs. Binds to RNA in loop regions with AU-rich sequences. The polypeptide is Probable ribonuclease FAU-1 (Saccharolobus islandicus (strain M.16.27) (Sulfolobus islandicus)).